Here is a 775-residue protein sequence, read N- to C-terminus: 5-methyltetrahydropteroyltriglutamate--homocysteine methyltransferase (775 aa).

Residues Arg-16–Lys-19 and Lys-115 contribute to the 5-methyltetrahydropteroyltri-L-glutamate site. L-homocysteine contacts are provided by residues Ile-435–Ser-437 and Glu-488. Residues Ile-435–Ser-437 and Glu-488 contribute to the L-methionine site. 5-methyltetrahydropteroyltri-L-glutamate contacts are provided by residues Arg-519–Cys-520 and Trp-565. Asp-603 contributes to the L-homocysteine binding site. Asp-603 provides a ligand contact to L-methionine. A 5-methyltetrahydropteroyltri-L-glutamate-binding site is contributed by Glu-609. 3 residues coordinate Zn(2+): His-645, Cys-647, and Glu-669. His-698 serves as the catalytic Proton donor. Residue Cys-730 coordinates Zn(2+).

The protein belongs to the vitamin-B12 independent methionine synthase family. Zn(2+) serves as cofactor.

The enzyme catalyses 5-methyltetrahydropteroyltri-L-glutamate + L-homocysteine = tetrahydropteroyltri-L-glutamate + L-methionine. It participates in amino-acid biosynthesis; L-methionine biosynthesis via de novo pathway; L-methionine from L-homocysteine (MetE route): step 1/1. Functionally, catalyzes the transfer of a methyl group from 5-methyltetrahydrofolate to homocysteine resulting in methionine formation. The protein is 5-methyltetrahydropteroyltriglutamate--homocysteine methyltransferase of Coxiella burnetii (strain CbuK_Q154) (Coxiella burnetii (strain Q154)).